A 412-amino-acid chain; its full sequence is Serine hydroxymethyltransferase (412 aa).

(6S)-5,6,7,8-tetrahydrofolate-binding positions include L117 and 121–123 (GHL). Position 226 is an N6-(pyridoxal phosphate)lysine (K226).

Belongs to the SHMT family. In terms of assembly, homodimer. Requires pyridoxal 5'-phosphate as cofactor.

The protein resides in the cytoplasm. The enzyme catalyses (6R)-5,10-methylene-5,6,7,8-tetrahydrofolate + glycine + H2O = (6S)-5,6,7,8-tetrahydrofolate + L-serine. Its pathway is one-carbon metabolism; tetrahydrofolate interconversion. It participates in amino-acid biosynthesis; glycine biosynthesis; glycine from L-serine: step 1/1. In terms of biological role, catalyzes the reversible interconversion of serine and glycine with tetrahydrofolate (THF) serving as the one-carbon carrier. This reaction serves as the major source of one-carbon groups required for the biosynthesis of purines, thymidylate, methionine, and other important biomolecules. Also exhibits THF-independent aldolase activity toward beta-hydroxyamino acids, producing glycine and aldehydes, via a retro-aldol mechanism. The protein is Serine hydroxymethyltransferase of Natranaerobius thermophilus (strain ATCC BAA-1301 / DSM 18059 / JW/NM-WN-LF).